The sequence spans 285 residues: NADPH-dependent 7-cyano-7-deazaguanine reductase (285 aa).

91-93 lines the substrate pocket; sequence IES. An NADPH-binding site is contributed by 93–94; sequence SK. C192 serves as the catalytic Thioimide intermediate. The Proton donor role is filled by D199. A substrate-binding site is contributed by 231–232; the sequence is HE. 260-261 lines the NADPH pocket; the sequence is RG.

This sequence belongs to the GTP cyclohydrolase I family. QueF type 2 subfamily. Homodimer.

The protein localises to the cytoplasm. It carries out the reaction 7-aminomethyl-7-carbaguanine + 2 NADP(+) = 7-cyano-7-deazaguanine + 2 NADPH + 3 H(+). It functions in the pathway tRNA modification; tRNA-queuosine biosynthesis. Catalyzes the NADPH-dependent reduction of 7-cyano-7-deazaguanine (preQ0) to 7-aminomethyl-7-deazaguanine (preQ1). The chain is NADPH-dependent 7-cyano-7-deazaguanine reductase from Psychromonas ingrahamii (strain DSM 17664 / CCUG 51855 / 37).